A 156-amino-acid polypeptide reads, in one-letter code: Small ribosomal subunit protein uS7 (156 aa).

This sequence belongs to the universal ribosomal protein uS7 family. In terms of assembly, part of the 30S ribosomal subunit. Contacts proteins S9 and S11.

Functionally, one of the primary rRNA binding proteins, it binds directly to 16S rRNA where it nucleates assembly of the head domain of the 30S subunit. Is located at the subunit interface close to the decoding center, probably blocks exit of the E-site tRNA. The polypeptide is Small ribosomal subunit protein uS7 (Moorella thermoacetica (strain ATCC 39073 / JCM 9320)).